Consider the following 1063-residue polypeptide: ATP-dependent helicase hrq1 (1063 aa).

Positions Thr224–Ser243 are disordered. The Helicase ATP-binding domain maps to Ile320 to Leu503. An ATP-binding site is contributed by Thr333 to Ser340. The DEAH box motif lies at Asp444–His447. The 179-residue stretch at Glu539 to Glu717 folds into the Helicase C-terminal domain.

This sequence belongs to the helicase family. HRQ1 subfamily. As to quaternary structure, forms heptamer rings. Interacts with rhp14. It depends on Mg(2+) as a cofactor.

It is found in the nucleus. It carries out the reaction Couples ATP hydrolysis with the unwinding of duplex DNA by translocating in the 3'-5' direction.. The catalysed reaction is ATP + H2O = ADP + phosphate + H(+). In terms of biological role, helicase with 3'-5' helicase activity involved in genome stability. Functions in the nucleotide excision repair (NER) pathway and plays a critical role in DNA interstrand cross-link repair. Unwinds relatively long duplex DNA up to 120-bp and requires a long 3'-tail of at least 70 nucleotides for efficient unwinding of duplex DNA. Shows both processive helicase and DNA strand annealing activities. Affects telomere length by a non-catalytic mechanism, probably through inhibiting telomerase by competing with it for ssDNA binding. This Schizosaccharomyces pombe (strain 972 / ATCC 24843) (Fission yeast) protein is ATP-dependent helicase hrq1.